The chain runs to 420 residues: POU domain, class 4, transcription factor 1 (420 aa).

The POU-IV box motif lies at 57 to 66; that stretch reads RAEALAAVDI. 2 disordered regions span residues 94-117 and 132-200; these read STVP…GDLL and GGAG…XGHL. Positions 99-108 are enriched in basic residues; sequence AHHHHHHHHH. Composition is skewed to gly residues over residues 132–165 and 172–184; these read GGAG…GPGV and PGGG…GGLL. The POU-specific domain occupies 261-338; the sequence is DSDTDPRELE…ILQAWLEEAE (78 aa). Residues 356 to 415 constitute a DNA-binding region (homeobox); that stretch reads KKRKRTSIAAPEKRSLEAYFAVQPRPSSEKIAAIAEKLDLKKNVVRVWFCNQRQKQKRMK.

This sequence belongs to the POU transcription factor family. Class-4 subfamily. As to quaternary structure, interacts (via N-terminus) with RIT2; the interaction controls POU4F1 transactivation activity on some neuronal target genes. Isoform 1 interacts with POU4F2; this interaction inhibits both POU4F1 DNA-binding and transcriptional activities. Isoform 1 interacts (C-terminus) with ESR1 (via DNA-binding domain); this interaction decreases the estrogen receptor ESR1 transcriptional activity in a DNA- and ligand 17-beta-estradiol-independent manner. As to expression, detected in brain, spinal cord and dorsal root ganglion. Isoform 2 is detected in brain, spinal cord, dorsal root ganglion and spleen.

The protein localises to the nucleus. Its subcellular location is the cytoplasm. Functionally, multifunctional transcription factor with different regions mediating its different effects. Acts by binding (via its C-terminal domain) to sequences related to the consensus octamer motif 5'-ATGCAAAT-3' in the regulatory regions of its target genes. Regulates the expression of specific genes involved in differentiation and survival within a subset of neuronal lineages. It has been shown that activation of some of these genes requires its N-terminal domain, maybe through a neuronal-specific cofactor. Activates BCL2 expression and protects neuronal cells from apoptosis (via the N-terminal domain). Induces neuronal process outgrowth and the coordinate expression of genes encoding synaptic proteins. Exerts its major developmental effects in somatosensory neurons and in brainstem nuclei involved in motor control. Stimulates the binding affinity of the nuclear estrogene receptor ESR1 to DNA estrogen response element (ERE), and hence modulates ESR1-induced transcriptional activity. May positively regulate POU4F2 and POU4F3. Regulates dorsal root ganglion sensory neuron specification and axonal projection into the spinal cord. Plays a role in TNFSF11-mediated terminal osteoclast differentiation. Negatively regulates its own expression interacting directly with a highly conserved autoregulatory domain surrounding the transcription initiation site. In terms of biological role, able to act as transcription factor, cannot regulate the expression of the same subset of genes than isoform 1. Does not have anitapoptotic effect on neuronal cells. The chain is POU domain, class 4, transcription factor 1 (Pou4f1) from Rattus norvegicus (Rat).